A 553-amino-acid polypeptide reads, in one-letter code: Cytokine-like nuclear factor N-PAC (553 aa).

The PWWP domain occupies 8–66; that stretch reads LGDLVWGKLGRYPPWPGKIVNPPKDLKKPRGKKCFFVKFFGTEDHAWIKVEQLKPYHAH. Basic and acidic residues-rich tracts occupy residues 92–145 and 162–182; these read RAKG…EGKK and RAQEQSPRKRGRPPKDEKDLT. The tract at residues 92–188 is disordered; it reads RAKGKDQTSS…KDLTIPESST (97 aa). At Ser130 the chain carries Phosphoserine. Lys135 participates in a covalent cross-link: Glycyl lysine isopeptide (Lys-Gly) (interchain with G-Cter in SUMO2). Phosphoserine is present on Ser167. The segment at residues 168 to 180 is a DNA-binding region (a.T hook); it reads PRKRGRPPKDEKD. Residues Lys176, Lys179, Lys201, and Lys211 each participate in a glycyl lysine isopeptide (Lys-Gly) (interchain with G-Cter in SUMO2) cross-link. The segment at 214–217 is interaction with histone H3; the sequence is DPHF. The interaction with KDM1B stretch occupies residues 216–225; it reads HFHHFLLSQT. Glycyl lysine isopeptide (Lys-Gly) (interchain with G-Cter in SUMO2) cross-links involve residues Lys227, Lys237, Lys240, and Lys269. The dehydrogenase domain stretch occupies residues 261 to 553; that stretch reads GSITPTDKKI…MSAVYRAYIH (293 aa). 271-285 is an NAD(+) binding site; the sequence is GFLGLGLMGSGIVSN. A Glycyl lysine isopeptide (Lys-Gly) (interchain with G-Cter in SUMO2) cross-link involves residue Lys302. Residues Thr362 and Lys505 each contribute to the NAD(+) site. Phosphoserine is present on Ser540.

The protein belongs to the HIBADH-related family. NP60 subfamily. Homotetramere. Interacts with MAPK14. Interacts with KDM1B at nucleosomes; this interaction stimulates H3K4me1 and H3K4me2 demethylation. Binds to mononucleosomes. Interacts with GATA4; the interaction is required for a synergistic activation of GATA4 target genes transcription.

Its subcellular location is the nucleus. It localises to the chromosome. Its function is as follows. Cytokine-like nuclear factor with chromatin gene reader activity involved in chromatin modification and regulation of gene expression. Acts as a nucleosome-destabilizing factor that is recruited to genes during transcriptional activation. Recognizes and binds histone H3 without a preference for specific epigenetic markers and also binds DNA. Interacts with KDM1B and promotes its histone demethylase activity by facilitating the capture of H3 tails, they form a multifunctional enzyme complex that modifies transcribed chromatin and facilitates Pol II transcription through nucleosomes. Stimulates the acetylation of 'Lys-56' of nucleosomal histone H3 (H3K56ac) by EP300. With GATA4, co-binds a defined set of heart development genes and coregulates their expression during cardiomyocyte differentiation. Regulates p38 MAP kinase activity by mediating stress activation of MAPK14/p38alpha and specifically regulating MAPK14 signaling. Indirectly promotes phosphorylation of MAPK14 and activation of ATF2. The phosphorylation of MAPK14 requires upstream activity of MAP2K4 and MAP2K6. The chain is Cytokine-like nuclear factor N-PAC (GLYR1) from Pongo abelii (Sumatran orangutan).